The primary structure comprises 434 residues: Nuclear receptor subfamily 1 group I member 2 (434 aa).

The segment at residues 38–107 (PQICRVCGDK…RLRKCLESGM (70 aa)) is a DNA-binding region (nuclear receptor). 2 consecutive NR C4-type zinc fingers follow at residues 41 to 61 (CRVCGDKATGYHFNVMTCEGC) and 77 to 102 (CPFRKGACEITRKTRRQCQACRLRKC). Positions 66-92 (RRAMKRNARLRCPFRKGACEITRKTRR) match the Bipartite nuclear localization signal motif. The segment at 108-145 (KKEMIMSDEAVEERRALIKRKKSERTGTQPLGVQGLTE) is hinge. The 288-residue stretch at 146-433 (EQRMMIRELM…LMQELFGITG (288 aa)) folds into the NR LBD domain. Residues Ser247, 285–288 (QLRF), and His407 each bind hyperforin.

This sequence belongs to the nuclear hormone receptor family. NR1 subfamily. In terms of assembly, heterodimer with RXR. Interacts with NCOA1. Interacts (via domain NR LBD) with CRY1 and CRY2 in a ligand-dependent manner. Expressed in liver, colon and small intestine.

The protein localises to the nucleus. Nuclear receptor that binds and is activated by variety of endogenous and xenobiotic compounds. Transcription factor that activates the transcription of multiple genes involved in the metabolism and secretion of potentially harmful xenobiotics, drugs and endogenous compounds. Activated by the antibiotic rifampicin and various plant metabolites, such as hyperforin, guggulipid, colupulone, and isoflavones. Response to specific ligands is species-specific. Activated by naturally occurring steroids, such as pregnenolone and progesterone. Binds to a response element in the promoters of the CYP3A4 and ABCB1/MDR1 genes. The polypeptide is Nuclear receptor subfamily 1 group I member 2 (NR1I2) (Homo sapiens (Human)).